We begin with the raw amino-acid sequence, 73 residues long: Large ribosomal subunit protein bL31 (73 aa).

Cysteine 16, cysteine 18, cysteine 36, and cysteine 39 together coordinate Zn(2+).

Belongs to the bacterial ribosomal protein bL31 family. Type A subfamily. Part of the 50S ribosomal subunit. The cofactor is Zn(2+).

Its function is as follows. Binds the 23S rRNA. This is Large ribosomal subunit protein bL31 from Myxococcus xanthus (strain DK1622).